A 974-amino-acid chain; its full sequence is MTRTDPPDLLVSTVYQDIKVVDPGLTSKRQPCERSVARPAAPTPFNKRHCRSFDFLEALDEPTMETHPEPPPPEPAPPRARPRDSEPRRRTRSKSAPRASQGLATAPASPPVLQRRGREAQRAVRVEGSPRREPSYPALRALANELHPIKLQPQRGGPGRIAPLCATPGRCAPPEPPSGPVPHVRCRLDIKPDEAVLQHAARSSRSCAPRETTSWARTAPQFHGLTVPGPRHVALSRTPTPSDLYCTDPRTLYCDGPLPGPRDYLEHRSQPFTTPPGPTQFFYTEEPEGYAGSFTTSPGLPFDGYCSRPYLSEEPPRPSPRRGGSYYAGEVRTFPIQEPPSRSYYGETTRAYGMPFVPRYVPEEPRAHPGARTFYTEDFGRYRERDVLARTYPHPRSSPPWADWGPRPYRTLQVMPPPAPGPLLASWHGGTGTSPPRLATDSRHYSRSWDNILAPGPRREDPLGRGRSYENLLGREVRDTRGSSPEGRRPPVVVNLSTSPRRYAALSLSETSLTEKGRAGESLGRNWYVTPEITITDNDLRSVDRPTAKGWELPGGRPRQPVSTVPEGPASSRQRSLEQLDELITDLVIDSRSPAQAPEPAAEGLGRQLRRLLDSRAAGPGGATLLAPSRSPPASAGSTEEPTGSGEAADASPEPSADEDDLMTCSNARCRRTETMFNACLYFKSCHSCYTYYCSRLCRREDWDAHKARCVYGRVGSVCRHVLQFCRDSSPVHRAFSRIARVGFLSRGRGVLFLGFPSPGSADNFLRFGLEGLLLSPTYLSLRELATHAAPLGSYARELAAAGRLYEPAECFLLSVSVAVGPSAAPPGAAARPAPRTPGPTVRKFAKVALAAGSPTRPPPARGGEPDMETLILTPPPGTAGLDEEGEAGRRAREVAFIHIQRELRMRGVFLRHEFPRVYEQLCEFVEANRRFTPTTIYPTDRRTGRPFMCMIMAASEPRALDWVASANLLDDIM.

3 disordered regions span residues proline 23 to proline 137, alanine 201 to valine 233, and cysteine 306 to tyrosine 326. At serine 52 the chain carries Phosphoserine. Positions glutamate 69–arginine 79 are enriched in pro residues. Residues arginine 116 to proline 134 are compositionally biased toward basic and acidic residues. Phosphoserine is present on serine 129. Over residues alanine 201 to alanine 216 the composition is skewed to polar residues. Arginine 322 is modified (omega-N-methylarginine). Phosphoserine occurs at positions 468, 509, and 512. The interval aspartate 539–serine 576 is disordered. Phosphoserine is present on serine 593. Positions alanine 618 to aspartate 661 are disordered. A compositionally biased stretch (low complexity) spans alanine 623 to alanine 636. Position 749 is an asymmetric dimethylarginine; alternate (arginine 749). Arginine 749 bears the Omega-N-methylarginine; alternate mark.

The protein localises to the apical cell membrane. The protein resides in the cell projection. Its subcellular location is the cilium. It localises to the cell junction. It is found in the adherens junction. Its function is as follows. May be involved in the control of adherens junction integrity. The protein is Apical junction component 1 homolog (Ajm1) of Mus musculus (Mouse).